Reading from the N-terminus, the 257-residue chain is Acetylglutamate kinase (257 aa).

Substrate-binding positions include 41–42 (GG), arginine 63, and asparagine 158.

This sequence belongs to the acetylglutamate kinase family. ArgB subfamily.

It is found in the cytoplasm. The catalysed reaction is N-acetyl-L-glutamate + ATP = N-acetyl-L-glutamyl 5-phosphate + ADP. It participates in amino-acid biosynthesis; L-arginine biosynthesis; N(2)-acetyl-L-ornithine from L-glutamate: step 2/4. Its function is as follows. Catalyzes the ATP-dependent phosphorylation of N-acetyl-L-glutamate. This chain is Acetylglutamate kinase, found in Bacteroides thetaiotaomicron (strain ATCC 29148 / DSM 2079 / JCM 5827 / CCUG 10774 / NCTC 10582 / VPI-5482 / E50).